Consider the following 401-residue polypeptide: Tumor necrosis factor receptor superfamily member 11B (401 aa).

An N-terminal signal peptide occupies residues 1 to 21; it reads MNKWLCCALLVLLDIIEWTTQ. TNFR-Cys repeat units follow at residues 24 to 62, 65 to 105, 107 to 142, and 145 to 185; these read LPPK…KTLC, CPDH…NRVC, CEEG…NTVC, and CPDG…DNVC. 8 disulfide bridges follow: Cys-41–Cys-54, Cys-44–Cys-62, Cys-65–Cys-80, Cys-83–Cys-97, Cys-87–Cys-105, Cys-107–Cys-118, Cys-124–Cys-142, and Cys-145–Cys-160. An N-linked (GlcNAc...) asparagine glycan is attached at Asn-98. N-linked (GlcNAc...) asparagine glycosylation is found at Asn-165 and Asn-178. Cys-166 and Cys-185 are joined by a disulfide. 2 Death domains span residues 198–269 and 283–365; these read DVTL…MVKK and RHLG…THSL. An N-linked (GlcNAc...) asparagine glycan is attached at Asn-289.

Homodimer. Interacts with TNFSF10 and TNFSF11. Highly expressed in liver, lung, stomach, intestines and calvaria. Highly expressed in decidua and placenta, and in embryo.

Its subcellular location is the secreted. Acts as a decoy receptor for TNFSF11/RANKL and thereby neutralizes its function in osteoclastogenesis. Inhibits the activation of osteoclasts and promotes osteoclast apoptosis in vitro. Bone homeostasis seems to depend on the local ratio between TNFSF11 and TNFRSF11B. May also play a role in preventing arterial calcification. May act as decoy receptor for TNFSF10/TRAIL and protect against apoptosis. TNFSF10/TRAIL binding blocks the inhibition of osteoclastogenesis. This Mus musculus (Mouse) protein is Tumor necrosis factor receptor superfamily member 11B (Tnfrsf11b).